A 338-amino-acid chain; its full sequence is Ketol-acid reductoisomerase (NADP(+)) (338 aa).

Positions 1–181 constitute a KARI N-terminal Rossmann domain; that stretch reads MQVYYDKDCD…GGGRTGIIET (181 aa). NADP(+) is bound by residues 24–27, R47, S50, S52, and 82–85; these read YGSQ and DEFQ. The active site involves H107. G133 is a binding site for NADP(+). In terms of domain architecture, KARI C-terminal knotted spans 182 to 327; it reads TFKDETETDL…EKLRAMMPWI (146 aa). D190, E194, E226, and E230 together coordinate Mg(2+). A substrate-binding site is contributed by S251.

It belongs to the ketol-acid reductoisomerase family. It depends on Mg(2+) as a cofactor.

The catalysed reaction is (2R)-2,3-dihydroxy-3-methylbutanoate + NADP(+) = (2S)-2-acetolactate + NADPH + H(+). It carries out the reaction (2R,3R)-2,3-dihydroxy-3-methylpentanoate + NADP(+) = (S)-2-ethyl-2-hydroxy-3-oxobutanoate + NADPH + H(+). It functions in the pathway amino-acid biosynthesis; L-isoleucine biosynthesis; L-isoleucine from 2-oxobutanoate: step 2/4. The protein operates within amino-acid biosynthesis; L-valine biosynthesis; L-valine from pyruvate: step 2/4. Functionally, involved in the biosynthesis of branched-chain amino acids (BCAA). Catalyzes an alkyl-migration followed by a ketol-acid reduction of (S)-2-acetolactate (S2AL) to yield (R)-2,3-dihydroxy-isovalerate. In the isomerase reaction, S2AL is rearranged via a Mg-dependent methyl migration to produce 3-hydroxy-3-methyl-2-ketobutyrate (HMKB). In the reductase reaction, this 2-ketoacid undergoes a metal-dependent reduction by NADPH to yield (R)-2,3-dihydroxy-isovalerate. The sequence is that of Ketol-acid reductoisomerase (NADP(+)) from Teredinibacter turnerae (strain ATCC 39867 / T7901).